The chain runs to 139 residues: Putative pre-16S rRNA nuclease (139 aa).

It belongs to the YqgF nuclease family.

The protein localises to the cytoplasm. In terms of biological role, could be a nuclease involved in processing of the 5'-end of pre-16S rRNA. In Streptococcus sanguinis (strain SK36), this protein is Putative pre-16S rRNA nuclease.